We begin with the raw amino-acid sequence, 435 residues long: Elongation factor 1-alpha (435 aa).

The tr-type G domain occupies 4–229; that stretch reads KPHLNLIVIG…DQLEIPPKPV (226 aa). The segment at 13–20 is G1; sequence GHVDHGKS. 13–20 provides a ligand contact to GTP; that stretch reads GHVDHGKS. Ser20 is a binding site for Mg(2+). The G2 stretch occupies residues 69–73; sequence GVTIN. The G3 stretch occupies residues 90–93; sequence DAPG. Residues 90-94 and 152-155 each bind GTP; these read DAPGH and NKMD. Residues 152–155 are G4; that stretch reads NKMD. The G5 stretch occupies residues 193–195; that stretch reads VAP.

Belongs to the TRAFAC class translation factor GTPase superfamily. Classic translation factor GTPase family. EF-Tu/EF-1A subfamily.

The protein localises to the cytoplasm. It carries out the reaction GTP + H2O = GDP + phosphate + H(+). GTP hydrolase that promotes the GTP-dependent binding of aminoacyl-tRNA to the A-site of ribosomes during protein biosynthesis. The polypeptide is Elongation factor 1-alpha (Sulfurisphaera tokodaii (strain DSM 16993 / JCM 10545 / NBRC 100140 / 7) (Sulfolobus tokodaii)).